Here is a 716-residue protein sequence, read N- to C-terminus: Protein Hook homolog 2 (716 aa).

Residues 1–161 (MSVDKAELCG…ELMTKDTPDS (161 aa)) are required for localization to the centrosome and induction of aggresome formation. Residues 1–546 (MSVDKAELCG…LKRKLEDHLQ (546 aa)) form a sufficient for interaction with microtubules region. The Calponin-homology (CH) domain occupies 6 to 122 (AELCGSLLTW…KLLQLVLGCA (117 aa)). Position 163 is a phosphoserine (S163). 2 coiled-coil regions span residues 188 to 427 (DHLQ…AQLQ) and 455 to 605 (AELR…VDKA). Residues 533–716 (DPTLLKRKLE…ALSLRPTDKH (184 aa)) are required for localization to the centrosome and induction of aggresome formation. The interval 582–716 (DSLQKKDADL…ALSLRPTDKH (135 aa)) is sufficient for interaction with CNTRL.

It belongs to the hook family. As to quaternary structure, self-associates. Component of the FTS/Hook/FHIP complex (FHF complex), composed of AKTIP/FTS, FHIP1B, and one or more members of the Hook family of proteins HOOK1, HOOK2, and HOOK3. May interact directly with AKTIP/FTS, HOOK1 and HOOK3. Associates with several subunits of the homotypic vesicular sorting complex (the HOPS complex) including VPS16 and VPS41; these interactions may be indirect. Interacts with CNTRL. Interacts with microtubules. Interacts with ZC3H14. Interacts with LRGUK (via guanylate kinase-like domain). Interacts with CCDC181. Interacts with AP4M1; the interaction is direct, mediates the interaction between FTS-Hook-FHIP (FHF) complex and AP-4 and the perinuclear distribution of AP-4. In terms of tissue distribution, expressed in brain, cerebellum, kidney, liver and heart, with highest levels in heart and kidney (at protein level).

It localises to the cytoplasm. It is found in the cytoskeleton. The protein resides in the microtubule organizing center. The protein localises to the centrosome. Its subcellular location is the golgi apparatus. It localises to the trans-Golgi network. In terms of biological role, component of the FTS/Hook/FHIP complex (FHF complex). The FHF complex may function to promote vesicle trafficking and/or fusion via the homotypic vesicular protein sorting complex (the HOPS complex). Contributes to the establishment and maintenance of centrosome function. May function in the positioning or formation of aggresomes, which are pericentriolar accumulations of misfolded proteins, proteasomes and chaperones. FHF complex promotes the distribution of AP-4 complex to the perinuclear area of the cell. In Mus musculus (Mouse), this protein is Protein Hook homolog 2 (Hook2).